The primary structure comprises 255 residues: Aquaporin TIP4-1 (255 aa).

Helical transmembrane passes span 25–45 and 61–81; these read AVLA…SAAM and TLAA…TAGF. The NPA 1 signature appears at 89–91; sequence NPA. Helical transmembrane passes span 108 to 128, 148 to 168, and 176 to 196; these read VLYV…LRFL, GLVM…AMIL, and AIGP…GGNF. The short motif at 202–204 is the NPA 2 element; the sequence is NPA. Residues 223–243 traverse the membrane as a helical segment; that stretch reads WIGPLLGGPLAGFVYESLFLV.

The protein belongs to the MIP/aquaporin (TC 1.A.8) family. TIP (TC 1.A.8.10) subfamily.

It localises to the vacuole membrane. Its function is as follows. Aquaporins facilitate the transport of water and small neutral solutes across cell membranes. This Zea mays (Maize) protein is Aquaporin TIP4-1 (TIP4-1).